The primary structure comprises 77 residues: U14-theraphotoxin-Cg1b (77 aa).

The N-terminal stretch at 1 to 21 (MKTSVLLVILGIAAITVQCTA) is a signal peptide. The propeptide occupies 22 to 49 (SESVEQDSLRTFVDAVLGWNAEMASEAR). 3 disulfides stabilise this stretch: cysteine 50–cysteine 64, cysteine 57–cysteine 69, and cysteine 63–cysteine 75.

The protein belongs to the neurotoxin 10 (Hwtx-1) family. 65 (Jztx-21) subfamily. As to expression, expressed by the venom gland.

The protein resides in the secreted. In terms of biological role, probable ion channel inhibitor. This is U14-theraphotoxin-Cg1b from Chilobrachys guangxiensis (Chinese earth tiger tarantula).